Here is a 238-residue protein sequence, read N- to C-terminus: uncharacterized protein (238 aa).

Positions 1–19 (MKINLFFVFLFELLHFVAA) are cleaved as a signal peptide. At 20–197 (YSCEGDESAA…LALYGHLSQK (178 aa)) the chain is on the lumenal side. A helical transmembrane segment spans residues 198–216 (YTPLGMNVAIFGISAYIMY). Residues 217–238 (RSSKKAKQKQAAAAAAAAAKKK) lie on the Cytoplasmic side of the membrane.

It localises to the endoplasmic reticulum membrane. This is an uncharacterized protein from Schizosaccharomyces pombe (strain 972 / ATCC 24843) (Fission yeast).